The sequence spans 58 residues: Potassium channel toxin alpha-KTx 1.6 (58 aa).

The N-terminal stretch at Met1–Ala21 is a signal peptide. Gln22 is subject to Pyrrolidone carboxylic acid. 3 cysteine pairs are disulfide-bonded: Cys28–Cys49, Cys34–Cys54, and Cys38–Cys56.

This sequence belongs to the short scorpion toxin superfamily. Potassium channel inhibitor family. Alpha-KTx 01 subfamily. As to expression, expressed by the venom gland.

The protein resides in the secreted. In terms of biological role, potent blocker of both large-conductance calcium-activated potassium channels (KCa1.1/KCNMA1) and voltage-gated potassium channels (Kv1.3/KCNA3 and ERG1/Kv11.1/KCNH2). This Olivierus martensii (Manchurian scorpion) protein is Potassium channel toxin alpha-KTx 1.6.